Consider the following 142-residue polypeptide: Hemoglobin subunit alpha (142 aa).

Ser-1 is subject to N-acetylserine. A Globin domain is found at 1–142; it reads SLTAKSKSIV…VASALSEKYR (142 aa). Residue His-59 coordinates O2. Residue His-88 participates in heme b binding.

The protein belongs to the globin family. Heterotetramer of two alpha chains and two beta chains. As to expression, red blood cells.

In terms of biological role, involved in oxygen transport from gills to the various peripheral tissues. This chain is Hemoglobin subunit alpha (hba), found in Electrophorus electricus (Electric eel).